The sequence spans 105 residues: Chloroacetanilide N-alkylformylase 1, ferredoxin component (105 aa).

The 2Fe-2S ferredoxin-type domain occupies 2-105; that stretch reads PTIIVTTRDG…GLRVAIAPED (104 aa). 4 residues coordinate [2Fe-2S] cluster: Cys40, Cys46, Cys49, and Cys86.

This sequence belongs to the adrenodoxin/putidaredoxin family. In terms of assembly, the chloroacetanilide N-alkylformylase multicomponent enzyme system is composed of an oxygenase component (CndA) and an electron transfer component formed by a ferredoxin reductase (CndC1) and a ferredoxin (CndB1). In vitro, chloroacetanilide N-alkylformylase assays in which CndB1 is substituted for CndB2 demonstrate that the two enzymes possess nearly identical activities. [2Fe-2S] cluster is required as a cofactor.

In terms of biological role, component of the chloroacetanilide N-alkylformylase multicomponent enzyme system involved in the degradation of chloroacetanilide herbicides (N-alkoxyalkyl-N-chloroacetyl-substituted aniline derivatives). In vitro, functions as an intermediate electron transfer protein. The protein is Chloroacetanilide N-alkylformylase 1, ferredoxin component of Rhizorhabdus wittichii (strain DC-6 / KACC 16600) (Sphingomonas wittichii).